The chain runs to 331 residues: DNA-directed RNA polymerase subunit alpha (331 aa).

Positions 1–230 (MKNIKTSPYI…KQMSVFNSEW (230 aa)) are alpha N-terminal domain (alpha-NTD). An alpha C-terminal domain (alpha-CTD) region spans residues 247 to 331 (LKPLLQKIEA…ALQKRLNKLK (85 aa)).

It belongs to the RNA polymerase alpha chain family. In terms of assembly, homodimer. The RNAP catalytic core consists of 2 alpha, 1 beta/beta' and 1 omega subunit. When a sigma factor is associated with the core the holoenzyme is formed, which can initiate transcription.

The catalysed reaction is RNA(n) + a ribonucleoside 5'-triphosphate = RNA(n+1) + diphosphate. Functionally, DNA-dependent RNA polymerase catalyzes the transcription of DNA into RNA using the four ribonucleoside triphosphates as substrates. This is DNA-directed RNA polymerase subunit alpha from Wolinella succinogenes (strain ATCC 29543 / DSM 1740 / CCUG 13145 / JCM 31913 / LMG 7466 / NCTC 11488 / FDC 602W) (Vibrio succinogenes).